We begin with the raw amino-acid sequence, 340 residues long: Phosphate acyltransferase (340 aa).

The protein belongs to the PlsX family. In terms of assembly, homodimer. Probably interacts with PlsY.

It localises to the cytoplasm. It carries out the reaction a fatty acyl-[ACP] + phosphate = an acyl phosphate + holo-[ACP]. Its pathway is lipid metabolism; phospholipid metabolism. Its function is as follows. Catalyzes the reversible formation of acyl-phosphate (acyl-PO(4)) from acyl-[acyl-carrier-protein] (acyl-ACP). This enzyme utilizes acyl-ACP as fatty acyl donor, but not acyl-CoA. The sequence is that of Phosphate acyltransferase from Helicobacter pylori (strain HPAG1).